The chain runs to 510 residues: 2,3-bisphosphoglycerate-independent phosphoglycerate mutase (510 aa).

Positions 12 and 62 each coordinate Mn(2+). Ser62 serves as the catalytic Phosphoserine intermediate. Residues His123, 153-154 (RD), Arg185, Arg191, 260-263 (RPDR), and Lys335 contribute to the substrate site. Mn(2+) is bound by residues Asp402, His406, Asp443, His444, and His461.

It belongs to the BPG-independent phosphoglycerate mutase family. In terms of assembly, monomer. The cofactor is Mn(2+).

The catalysed reaction is (2R)-2-phosphoglycerate = (2R)-3-phosphoglycerate. It functions in the pathway carbohydrate degradation; glycolysis; pyruvate from D-glyceraldehyde 3-phosphate: step 3/5. Its function is as follows. Catalyzes the interconversion of 2-phosphoglycerate and 3-phosphoglycerate. This chain is 2,3-bisphosphoglycerate-independent phosphoglycerate mutase, found in Listeria welshimeri serovar 6b (strain ATCC 35897 / DSM 20650 / CCUG 15529 / CIP 8149 / NCTC 11857 / SLCC 5334 / V8).